A 495-amino-acid polypeptide reads, in one-letter code: Taxoid 2-alpha-hydroxylase (495 aa).

The helical transmembrane segment at 17-37 (LQSSAILLTVVSGIIVIVILL) threads the bilayer. Cysteine 441 contacts heme.

This sequence belongs to the cytochrome P450 family.

The protein localises to the microsome membrane. The catalysed reaction is taxusin + reduced [NADPH--hemoprotein reductase] + O2 = 2alpha-hydroxytaxusin + oxidized [NADPH--hemoprotein reductase] + H2O + H(+). The enzyme catalyses 7beta-hydroxytaxusin + reduced [NADPH--hemoprotein reductase] + O2 = 2alpha,7beta-dihydroxytaxusin + oxidized [NADPH--hemoprotein reductase] + H2O + H(+). Its pathway is alkaloid biosynthesis; taxol biosynthesis. Its function is as follows. Catalyzes the conversion of taxusin to 2-alpha-hydroxytaxusin in taxol biosynthesis. Catalyzes the conversion of 7-beta-hydroxytaxusin to 2-alpha-7-beta-hydroxytaxusin in taxol biosynthesis. The chain is Taxoid 2-alpha-hydroxylase from Taxus canadensis (Canadian yew).